Here is a 443-residue protein sequence, read N- to C-terminus: tRNA modification GTPase MnmE (443 aa).

3 residues coordinate (6S)-5-formyl-5,6,7,8-tetrahydrofolate: R19, E78, and K118. Residues 214 to 366 (GFKIAIIGPT…LISKIKNKLK (153 aa)) enclose the TrmE-type G domain. Residue N224 coordinates K(+). Residues 224-229 (NAGKSS), 243-249 (SEIAGTT), and 268-271 (DTAG) each bind GTP. S228 contacts Mg(2+). K(+)-binding residues include S243, I245, and T248. T249 contacts Mg(2+). K443 serves as a coordination point for (6S)-5-formyl-5,6,7,8-tetrahydrofolate.

This sequence belongs to the TRAFAC class TrmE-Era-EngA-EngB-Septin-like GTPase superfamily. TrmE GTPase family. As to quaternary structure, homodimer. Heterotetramer of two MnmE and two MnmG subunits. It depends on K(+) as a cofactor.

Its subcellular location is the cytoplasm. Its function is as follows. Exhibits a very high intrinsic GTPase hydrolysis rate. Involved in the addition of a carboxymethylaminomethyl (cmnm) group at the wobble position (U34) of certain tRNAs, forming tRNA-cmnm(5)s(2)U34. This chain is tRNA modification GTPase MnmE, found in Pelagibacter ubique (strain HTCC1062).